Here is a 474-residue protein sequence, read N- to C-terminus: Ribulose bisphosphate carboxylase/oxygenase activase, chloroplastic (474 aa).

A chloroplast-targeting transit peptide spans 1–58 (MAAAVSTVGAINRAPLSLNGSGSGAVSAPASTFLGKKVVTVSRFAQSNKKSNGSFKVL). T78 carries the phosphothreonine; by CK2 modification. 165 to 172 (GGKGQGKS) provides a ligand contact to ATP. T283 is subject to Phosphothreonine.

This sequence belongs to the RuBisCO activase family. Phosphorylated at Thr-78 by CK2.

It is found in the plastid. Its subcellular location is the chloroplast stroma. The protein resides in the chloroplast. It localises to the plastoglobule. Functionally, activation of RuBisCO (ribulose-1,5-bisphosphate carboxylase/oxygenase; EC 4.1.1.39) involves the ATP-dependent carboxylation of the epsilon-amino group of lysine leading to a carbamate structure. This is Ribulose bisphosphate carboxylase/oxygenase activase, chloroplastic (RCA) from Arabidopsis thaliana (Mouse-ear cress).